A 213-amino-acid chain; its full sequence is Ras-related protein Rab-25 (213 aa).

GTP-binding residues include Ser-21, Gly-24, Lys-25, Thr-26, Asn-27, Ser-38, His-39, Thr-43, and Thr-44. Thr-26 provides a ligand contact to Mg(2+). 2 consecutive short sequence motifs (switch) follow at residues Asn-35–Phe-49 and Asp-67–Gly-84. The Mg(2+) site is built by Thr-44 and Asp-67. 6 residues coordinate GTP: Gly-70, Asn-125, Lys-126, Asp-128, Ala-156, and Leu-157. S-geranylgeranyl cysteine attachment occurs at residues Cys-209 and Cys-210. At Cys-210 the chain carries Cysteine methyl ester. Positions Ile-211 to Leu-213 are cleaved as a propeptide — removed in mature form.

It belongs to the small GTPase superfamily. Rab family. As to quaternary structure, interacts (GTP-bound form) with RAB11FIP1, RAB11FIP2, RAB11FIP3 and RAB11FIP4. Interacts (via the hypervariable C-terminal region) with ITGB1 (via the cytoplasmic region); the interaction is GTP-dependent. Interacts with ITGAV. Associates with the integrin alpha-V/beta-1 heterodimer. Interacts with VPS33B. Mg(2+) is required as a cofactor. In terms of tissue distribution, expression is restricted to epithelial cells. Expressed in the gastrointestinal mucosa, (highest expression seen in the ileum and colon), kidney, and lung. A very minor and variable level of expression is seen in the splenic tissue.

It is found in the cell membrane. The protein resides in the cell projection. The protein localises to the pseudopodium membrane. Its subcellular location is the cytoplasmic vesicle. The catalysed reaction is GTP + H2O = GDP + phosphate + H(+). With respect to regulation, regulated by guanine nucleotide exchange factors (GEFs) which promote the exchange of bound GDP for free GTP. Regulated by GTPase activating proteins (GAPs) which increase the GTP hydrolysis activity. Inhibited by GDP dissociation inhibitors (GDIs) which prevent Rab-GDP dissociation. In terms of biological role, the small GTPases Rab are key regulators of intracellular membrane trafficking, from the formation of transport vesicles to their fusion with membranes. Rabs cycle between an inactive GDP-bound form and an active GTP-bound form that is able to recruit to membranes different set of downstream effectors directly responsible for vesicle formation, movement, tethering and fusion. RAB25 regulates epithelial cell differentiation, proliferation and survival, thereby playing key roles in tumorigenesis. Promotes invasive migration of cells in which it functions to localize and maintain integrin alpha-V/beta-1 at the tips of extending pseudopodia. Involved in the regulation of epithelial morphogenesis through the control of CLDN4 expression and localization at tight junctions. May selectively regulate the apical recycling pathway. Together with MYO5B regulates transcytosis. The polypeptide is Ras-related protein Rab-25 (RAB25) (Oryctolagus cuniculus (Rabbit)).